Consider the following 143-residue polypeptide: Transcriptional regulator MraZ (143 aa).

SpoVT-AbrB domains are found at residues 5–47 (EYRH…PQSE) and 76–119 (ASEC…SKTL).

Belongs to the MraZ family. In terms of assembly, forms oligomers.

The protein localises to the cytoplasm. The protein resides in the nucleoid. In Shouchella clausii (strain KSM-K16) (Alkalihalobacillus clausii), this protein is Transcriptional regulator MraZ.